Here is a 1213-residue protein sequence, read N- to C-terminus: DNA-directed RNA polymerase subunit beta' (1213 aa).

Residues cysteine 60, cysteine 62, cysteine 75, and cysteine 78 each contribute to the Zn(2+) site. Residues aspartate 450, aspartate 452, and aspartate 454 each contribute to the Mg(2+) site. Residues cysteine 819, cysteine 893, cysteine 900, and cysteine 903 each contribute to the Zn(2+) site.

This sequence belongs to the RNA polymerase beta' chain family. As to quaternary structure, the RNAP catalytic core consists of 2 alpha, 1 beta, 1 beta' and 1 omega subunit. When a sigma factor is associated with the core the holoenzyme is formed, which can initiate transcription. It depends on Mg(2+) as a cofactor. Zn(2+) serves as cofactor.

It carries out the reaction RNA(n) + a ribonucleoside 5'-triphosphate = RNA(n+1) + diphosphate. Functionally, DNA-dependent RNA polymerase catalyzes the transcription of DNA into RNA using the four ribonucleoside triphosphates as substrates. The protein is DNA-directed RNA polymerase subunit beta' of Streptococcus pyogenes serotype M18 (strain MGAS8232).